The chain runs to 210 residues: FMN-dependent NADH:quinone oxidoreductase (210 aa).

Residues serine 17–serine 19 and serine 148–glycine 151 contribute to the FMN site.

Belongs to the azoreductase type 1 family. Homodimer. FMN is required as a cofactor.

It carries out the reaction 2 a quinone + NADH + H(+) = 2 a 1,4-benzosemiquinone + NAD(+). The catalysed reaction is N,N-dimethyl-1,4-phenylenediamine + anthranilate + 2 NAD(+) = 2-(4-dimethylaminophenyl)diazenylbenzoate + 2 NADH + 2 H(+). Its function is as follows. Quinone reductase that provides resistance to thiol-specific stress caused by electrophilic quinones. Also exhibits azoreductase activity. Catalyzes the reductive cleavage of the azo bond in aromatic azo compounds to the corresponding amines. The chain is FMN-dependent NADH:quinone oxidoreductase from Geotalea uraniireducens (strain Rf4) (Geobacter uraniireducens).